A 348-amino-acid polypeptide reads, in one-letter code: Myricetin O-methyltransferase (348 aa).

Met-1 carries the N-acetylmethionine modification. S-adenosyl-L-methionine contacts are provided by Gly-189, Asp-212, Asp-232, Met-233, and Lys-246. His-250 acts as the Proton acceptor in catalysis.

The N-terminus is blocked.

It catalyses the reaction S-adenosyl-L-methionine + a 3'-hydroxyflavonoid = S-adenosyl-L-homocysteine + a 3'-methoxyflavonoid.. The enzyme catalyses S-adenosyl-L-methionine + a 5'-hydroxy-3'-methoxyflavonoid = S-adenosyl-L-homocysteine + a 3',5'-dimethoxyflavonoid.. In terms of biological role, methylates myricetin and dihydromyricetin at 2 sites. Inactive towards 16-hydroxytabersonine, the phenylpropanoids 5-hydroxyferulate, caffeate and their CoA-esters, flavones and flavanones possessing 2 or 3 B-ring hydroxyl groups. This Catharanthus roseus (Madagascar periwinkle) protein is Myricetin O-methyltransferase.